The sequence spans 309 residues: UDP-N-acetylenolpyruvoylglucosamine reductase (309 aa).

In terms of domain architecture, FAD-binding PCMH-type spans 34–221; the sequence is RVGGPAQVLF…TAAREAAQPI (188 aa). Residue R179 is part of the active site. S228 (proton donor) is an active-site residue. E298 is an active-site residue.

The protein belongs to the MurB family. FAD serves as cofactor.

It is found in the cytoplasm. The catalysed reaction is UDP-N-acetyl-alpha-D-muramate + NADP(+) = UDP-N-acetyl-3-O-(1-carboxyvinyl)-alpha-D-glucosamine + NADPH + H(+). It participates in cell wall biogenesis; peptidoglycan biosynthesis. Functionally, cell wall formation. The sequence is that of UDP-N-acetylenolpyruvoylglucosamine reductase from Methylorubrum extorquens (strain PA1) (Methylobacterium extorquens).